A 184-amino-acid chain; its full sequence is dITP/XTP pyrophosphatase (184 aa).

A substrate-binding site is contributed by 8–13 (TGNKGK). Residues E37 and D66 each coordinate Mg(2+). Residue D66 is the Proton acceptor of the active site. Residues S67, 142–145 (FGYD), K163, and 168–169 (HR) contribute to the substrate site.

The protein belongs to the HAM1 NTPase family. As to quaternary structure, homodimer. Requires Mg(2+) as cofactor.

The enzyme catalyses XTP + H2O = XMP + diphosphate + H(+). It catalyses the reaction dITP + H2O = dIMP + diphosphate + H(+). The catalysed reaction is ITP + H2O = IMP + diphosphate + H(+). Functionally, pyrophosphatase that catalyzes the hydrolysis of nucleoside triphosphates to their monophosphate derivatives, with a high preference for the non-canonical purine nucleotides XTP (xanthosine triphosphate), dITP (deoxyinosine triphosphate) and ITP. Seems to function as a house-cleaning enzyme that removes non-canonical purine nucleotides from the nucleotide pool, thus preventing their incorporation into DNA/RNA and avoiding chromosomal lesions. In Methanosarcina acetivorans (strain ATCC 35395 / DSM 2834 / JCM 12185 / C2A), this protein is dITP/XTP pyrophosphatase.